We begin with the raw amino-acid sequence, 416 residues long: Zinc finger protein 92 homolog (416 aa).

A KRAB domain is found at 14-85 (VSFEDVSVYF…DIPRTWATAG (72 aa)). The tract at residues 86–125 (LHIGDRTQSKTSTSTQKHSGRQLPGADPQGGKEGQAARSS) is disordered. 8 consecutive C2H2-type zinc fingers follow at residues 152–174 (YLCQ…RIIH), 180–202 (YACP…QRIH), 208–230 (YACP…QVIH), 236–258 (FACG…ARVH), 264–286 (YACP…QRTH), 292–314 (YACG…QRSH), 320–342 (FACR…RRVH), and 348–370 (YECS…QAVH). The tract at residues 368-416 (AVHGARRPAKAETARRLAGPGSTGPGSAVAATSPPRPSTAARPSRPSRR) is disordered. The span at 394–416 (SAVAATSPPRPSTAARPSRPSRR) shows a compositional bias: low complexity.

The protein belongs to the krueppel C2H2-type zinc-finger protein family.

Its subcellular location is the nucleus. Functionally, KRAB domain-containing zinc-finger protein that represses B1/Alu SINE transposable elements and modulates the transcription of nearby genes in a tissue-specific manner. It regulates glucose homeostasis and lipid metabolism by modulating the expression of the endocrine cell-defining transcription factor, MAFB, in pancreatic islets and, the fat metabolism regulator, ACACB, in adipose tissue and muscle. The chain is Zinc finger protein 92 homolog (ZFP92) from Homo sapiens (Human).